The sequence spans 1387 residues: DNA-directed RNA polymerase subunit beta (1387 aa).

Belongs to the RNA polymerase beta chain family. In terms of assembly, the RNAP catalytic core consists of 2 alpha, 1 beta, 1 beta' and 1 omega subunit. When a sigma factor is associated with the core the holoenzyme is formed, which can initiate transcription.

It carries out the reaction RNA(n) + a ribonucleoside 5'-triphosphate = RNA(n+1) + diphosphate. Its function is as follows. DNA-dependent RNA polymerase catalyzes the transcription of DNA into RNA using the four ribonucleoside triphosphates as substrates. This chain is DNA-directed RNA polymerase subunit beta, found in Xanthomonas campestris pv. campestris (strain ATCC 33913 / DSM 3586 / NCPPB 528 / LMG 568 / P 25).